We begin with the raw amino-acid sequence, 351 residues long: RCC1 repeat-containing protein C10F6.04 (351 aa).

4 RCC1 repeats span residues 1-48 (MLLS…LLDE), 50-106 (SQLW…IVHA), 108-162 (RRRV…CVTN), and 163-212 (EGNL…VLQE).

Its subcellular location is the cytoplasm. The protein resides in the nucleus. The polypeptide is RCC1 repeat-containing protein C10F6.04 (Schizosaccharomyces pombe (strain 972 / ATCC 24843) (Fission yeast)).